Reading from the N-terminus, the 702-residue chain is Polyribonucleotide nucleotidyltransferase 1 (702 aa).

Mg(2+) contacts are provided by Asp483 and Asp489. In terms of domain architecture, KH spans 550–609; sequence PQVTKLKVHPDKVREVIGAGGKVINKIIDETGVKINIENDGTIYIAAPDQESARVALEMI. An S1 motif domain is found at 619–687; sequence GEVYTGKVIK…PQGKIGLSRK (69 aa).

The protein belongs to the polyribonucleotide nucleotidyltransferase family. Mg(2+) is required as a cofactor.

It is found in the cytoplasm. The enzyme catalyses RNA(n+1) + phosphate = RNA(n) + a ribonucleoside 5'-diphosphate. In terms of biological role, involved in mRNA degradation. Catalyzes the phosphorolysis of single-stranded polyribonucleotides processively in the 3'- to 5'-direction. The sequence is that of Polyribonucleotide nucleotidyltransferase 1 from Alkaliphilus metalliredigens (strain QYMF).